We begin with the raw amino-acid sequence, 792 residues long: Zinc finger CCCH domain-containing protein 11A (792 aa).

3 C3H1-type zinc fingers span residues 2–29 (PNQG…HCEA), 31–57 (LGNE…HMEI), and 60–87 (KRSE…HTRS). 3 disordered regions span residues 103-191 (PTVP…VHNG), 223-331 (KKMK…KAGE), and 345-443 (ASQK…RSMQ). Phosphoserine is present on serine 108. Glycyl lysine isopeptide (Lys-Gly) (interchain with G-Cter in SUMO2) cross-links involve residues lysine 114 and lysine 124. A compositionally biased stretch (polar residues) spans 115 to 135 (TSQLTVQQSKLSVQSNPSPQL). Position 132 is a phosphoserine (serine 132). Residue lysine 140 forms a Glycyl lysine isopeptide (Lys-Gly) (interchain with G-Cter in SUMO2) linkage. A phosphoserine mark is found at serine 149, serine 171, and serine 289. Residues 160–175 (ADDDEDDDDQFSEEGD) are compositionally biased toward acidic residues. 2 stretches are compositionally biased toward basic and acidic residues: residues 308 to 331 (KKVE…KAGE) and 345 to 360 (ASQK…KAEE). Residues 338–360 (EEILLERASQKRGELQTKLKAEE) are a coiled coil. Serine 346 carries the phosphoserine modification. Residues 367-376 (SPSGTKSSSS) are compositionally biased toward low complexity. 2 stretches are compositionally biased toward basic and acidic residues: residues 393–405 (QQEM…KKDT) and 431–443 (QPEE…RSMQ). Lysine 454 is covalently cross-linked (Glycyl lysine isopeptide (Lys-Gly) (interchain with G-Cter in SUMO2)). Disordered stretches follow at residues 458 to 531 (ALRV…PTKL) and 545 to 571 (QRLQ…ASSY). The segment covering 461–473 (VQQSSESSGNSRP) has biased composition (polar residues). Composition is skewed to basic and acidic residues over residues 492-501 (GVKEEKKCGL) and 545-558 (QRLQ…KEKA). Residue lysine 601 forms a Glycyl lysine isopeptide (Lys-Gly) (interchain with G-Cter in SUMO2) linkage. Residues 690–750 (LSEDKPVTMS…SASTGKPPLS (61 aa)) are disordered. Polar residues predominate over residues 698 to 715 (MSETENPKDSSVLSSAQA). Positions 717–730 (SEPLLPEGSGPSSS) are enriched in low complexity.

Interacts with TREX complex components THOC2, DDX39 and POLDIP3; the interactions are ATP-dependent. Interacts with PABPN1; this interaction retains ZC3H11A in nuclear speckles. Interacts with KPNA3.

The protein localises to the nucleus speckle. Its function is as follows. Through its association with TREX complex components, may participate in the export and post-transcriptional coordination of selected mRNA transcripts, including those required to maintain the metabolic processes in embryonic cells. Binds RNA. The polypeptide is Zinc finger CCCH domain-containing protein 11A (Zc3h11a) (Mus musculus (Mouse)).